A 93-amino-acid chain; its full sequence is Large ribosomal subunit protein uL23cz/uL23cy (93 aa).

The protein belongs to the universal ribosomal protein uL23 family. Part of the 50S ribosomal subunit.

Its subcellular location is the plastid. The protein localises to the chloroplast. Its function is as follows. Binds to 23S rRNA. The chain is Large ribosomal subunit protein uL23cz/uL23cy (rpl23-A) from Lotus japonicus (Lotus corniculatus var. japonicus).